Here is a 192-residue protein sequence, read N- to C-terminus: Thymidine kinase (192 aa).

Residues 9–16 (SSMNAGKS) and 87–90 (DEAQ) each bind ATP. Glu88 functions as the Proton acceptor in the catalytic mechanism. Zn(2+)-binding residues include Cys145, Cys147, Cys182, and His185.

The protein belongs to the thymidine kinase family. Homotetramer.

It localises to the cytoplasm. The enzyme catalyses thymidine + ATP = dTMP + ADP + H(+). In Colwellia psychrerythraea (strain 34H / ATCC BAA-681) (Vibrio psychroerythus), this protein is Thymidine kinase.